A 67-amino-acid chain; its full sequence is Large ribosomal subunit protein uL29 (67 aa).

It belongs to the universal ribosomal protein uL29 family.

The sequence is that of Large ribosomal subunit protein uL29 from Methanothrix thermoacetophila (strain DSM 6194 / JCM 14653 / NBRC 101360 / PT) (Methanosaeta thermophila).